Here is a 123-residue protein sequence, read N- to C-terminus: MIQPQTLLNVADNSGARKLMCIRVIGAAGNQRYARIGDVIVAVIKDALPQMPLERSEVIRAVIVRTCKEFKCEDGIIIRYDDNAAVIIDQKGNPKGTRVFGAIAEELRGLNFTKIVSLAPEVL.

Belongs to the universal ribosomal protein uL14 family. In terms of assembly, part of the 50S ribosomal subunit.

It localises to the plastid. The protein localises to the chloroplast. Its function is as follows. Binds to 23S rRNA. In Triticum aestivum (Wheat), this protein is Large ribosomal subunit protein uL14c.